A 215-amino-acid polypeptide reads, in one-letter code: MKLILLILTAYLLGSIPTGLWIGQYFYNINLREHGSGNTGTTNTFRILGLKAGAATLLIDIFKGTLATLLPVLVGASNVSPIAIGFFAVLGHTFPIFAGFKGGKAVATSAGVLLGFAPLYLLFLAAVFVLTLYLFSMISLASLTASVVAVISVLTFPAAHFLLPGYDWLLTITIVVLAAIIILRHQDNMKRIKQQSENLIPWGLNLSKQQPASHH.

6 consecutive transmembrane segments (helical) span residues 3–23, 42–61, 68–90, 110–130, 134–154, and 162–182; these read LILLILTAYLLGSIPTGLWIG, TNTFRILGLKAGAATLLIDI, TLLPVLVGASNVSPIAIGFFAVL, AGVLLGFAPLYLLFLAAVFVL, LFSMISLASLTASVVAVISVL, and LLPGYDWLLTITIVVLAAIII.

It belongs to the PlsY family. In terms of assembly, probably interacts with PlsX.

It localises to the cell membrane. The enzyme catalyses an acyl phosphate + sn-glycerol 3-phosphate = a 1-acyl-sn-glycero-3-phosphate + phosphate. Its pathway is lipid metabolism; phospholipid metabolism. Functionally, catalyzes the transfer of an acyl group from acyl-phosphate (acyl-PO(4)) to glycerol-3-phosphate (G3P) to form lysophosphatidic acid (LPA). This enzyme utilizes acyl-phosphate as fatty acyl donor, but not acyl-CoA or acyl-ACP. The sequence is that of Glycerol-3-phosphate acyltransferase from Streptococcus equi subsp. zooepidemicus (strain MGCS10565).